A 430-amino-acid chain; its full sequence is Xaa-Pro aminopeptidase (430 aa).

Residues Asp-254, Asp-265, His-348, Glu-377, and Glu-400 each coordinate Mn(2+).

Belongs to the peptidase M24B family. As to quaternary structure, homotetramer. Mn(2+) serves as cofactor.

It carries out the reaction Release of any N-terminal amino acid, including proline, that is linked to proline, even from a dipeptide or tripeptide.. In Haemophilus influenzae (strain ATCC 51907 / DSM 11121 / KW20 / Rd), this protein is Xaa-Pro aminopeptidase (pepP).